The primary structure comprises 337 residues: Protein BIG GRAIN 1-like (337 aa).

Disordered regions lie at residues 1–32 (MRDM…PSFS), 120–163 (SAAG…RPAS), and 179–233 (KRPS…ARPS). Residues 137-146 (HEQPDVEKTA) are compositionally biased toward basic and acidic residues. Composition is skewed to low complexity over residues 150–163 (PGSA…RPAS), 195–209 (PACS…SSYA), and 219–230 (RTPPTTTTTARA).

The protein belongs to the BIG GRAIN 1 (BG1) plant protein family.

The protein localises to the cell membrane. Involved in auxin transport. Regulator of the auxin signaling pathway. This is Protein BIG GRAIN 1-like from Oryza sativa subsp. indica (Rice).